The following is a 308-amino-acid chain: L-lactate dehydrogenase 2 (308 aa).

Residues Val-14, Asp-35, Tyr-65, and 79–80 contribute to the NAD(+) site; that span reads GA. Residue Arg-88 participates in substrate binding. Position 101 (Ser-101) interacts with NAD(+). Residue 120 to 123 coordinates substrate; sequence NPVD. Thr-143 lines the NAD(+) pocket. 148-151 is a substrate binding site; sequence DTAR. Catalysis depends on His-175, which acts as the Proton acceptor. Residue Thr-225 coordinates substrate.

Belongs to the LDH/MDH superfamily. LDH family. As to quaternary structure, homotetramer.

It localises to the cytoplasm. The catalysed reaction is (S)-lactate + NAD(+) = pyruvate + NADH + H(+). It participates in fermentation; pyruvate fermentation to lactate; (S)-lactate from pyruvate: step 1/1. Functionally, catalyzes the conversion of lactate to pyruvate. This Lactobacillus johnsonii (strain CNCM I-12250 / La1 / NCC 533) protein is L-lactate dehydrogenase 2.